We begin with the raw amino-acid sequence, 3065 residues long: MEEKQQIILANQDGGTVAGAAPTFFVILKQPGNGKTDQGILVTNQDACALASSVSSPVKSKGKICLPADCTVGGITVTLDNNSMWNEFYHRSTEMILTKQGRRMFPYCRYWITGLDSNLKYILVMDISPVDNHRYKWNGRWWEPSGKAEPHVLGRVFIHPESPSTGHYWMHQPVSFYKLKLTNNTLDQEGHIILHSMHRYLPRLHLVPAEKAVEVIQLNGPGVHTFTFPQTEFFAVTAYQNIQITQLKIDYNPFAKGFRDDGLNNKPQRDGKQKNSSDQEGNNISSSSGHRVRLTEGQGSEIQPGDLDPLSRGHETSGKGLEKTSLNIKRDFLGFMDTDSALSEVPQLKQEISECLIASSFEDDSRVASPLDQNGSFNVVIKEEPLDDYDYELGECPEGVTVKQEETDEETDVYSNSDDDPILEKQLKRHNKVDNPEADHLSSKWLPSSPSGVAKAKMFKLDTGKMPVVYLEPCAVTRSTVKISELPDNMLSTSRKDKSSMLAELEYLPTYIENSNETAFCLGKESENGLRKHSPDLRVVQKYPLLKEPQWKYPDISDSISTERILDDSKDSVGDSLSGKEDLGRKRTTMLKIATAAKVVNANQNASPNVPGKRGRPRKLKLCKAGRPPKNTGKSLISTKNTPVSPGSTFPDVKPDLEDVDGVLFVSFESKEALDIHAVDGTTEESSSLQASTTNDSGYRARISQLEKELIEDLKTLRHKQVIHPGLQEVGLKLNSVDPTMSIDLKYLGVQLPLAPATSFPFWNLTGTNPASPDAGFPFVSRTGKTNDFTKIKGWRGKFHSASASRNEGGNSESSLKNRSAFCSDKLDEYLENEGKLMETSMGFSSNAPTSPVVYQLPTKSTSYVRTLDSVLKKQSTISPSTSYSLKPHSVPPVSRKAKSQNRQATFSGRTKSSYKSILPYPVSPKQKYSHVILGDKVTKNSSGIISENQANNFVVPTLDENIFPKQISLRQAQQQQQQQQGSRPPGLSKSQVKLMDLEDCALWEGKPRTYITEERADVSLTTLLTAQASLKTKPIHTIIRKRAPPCNNDFCRLGCVCSSLALEKRQPAHCRRPDCMFGCTCLKRKVVLVKGGSKTKHFQRKAAHRDPVFYDTLGEEAREEEEGIREEEEQLKEKKKRKKLEYTICETEPEQPVRHYPLWVKVEGEVDPEPVYIPTPSVIEPMKPLLLPQPEVLSPTVKGKLLTGIKSPRSYTPKPNPVIREEDKDPVYLYFESMMTCARVRVYERKKEDQRQPSSSSSPSPSFQQQTSCHSSPENHNNAKEPDSEQQPLKQLTCDLEDDSDKLQEKSWKSSCNEGESSSTSYMHQRSPGGPTKLIEIISDCNWEEDRNKILSILSQHINSNMPQSLKVGSFIIELASQRKSRGEKNPPVYSSRVKISMPSCQDQDDMAEKSGSETPDGPLSPGKMEDISPVQTDALDSVRERLHGGKGLPFYAGLSPAGKLVAYKRKPSSSTSGLIQVASNAKVAASRKPRTLLPSTSNSKMASSSGTATNRPGKNLKAFVPAKRPIAARPSPGGVFTQFVMSKVGALQQKIPGVSTPQTLAGTQKFSIRPSPVMVVTPVVSSEPVQVCSPVTAAVTTTTPQVFLENTTAVTPMTAISDVETKETTYSSGATTTGVVEVSETNTSTSVTSTQSTATVNLTKTTGITTPVASVAFPKSLVASPSTITLPVASTASTSLVVVTAAASSSMVTTPTSSLGSVPIILSGINGSPPVSQRPENAAQIPVATPQVSPNTVKRAGPRLLLIPVQQGSPTLRPVSNTQLQGHRMVLQPVRSPSGMNLFRHPNGQIVQLLPLHQLRGSNTQPNLQPVMFRNPGSVMGIRLPAPSKPSETPPSSTSSSAFSVMNPVIQAVGSSSAVNVITQAPSLLSSGASFVSQAGTLTLRISPPEPQSFASKTGSETKITYSSGGQPVGTASLIPLQSGSFALLQLPGQKPVPSSILQHVASLQMKRESQNPDQKDETNSIKREQETKKVLQSEGEAVDPEANVIKQNSGAATSEETLNDSLEDRGDHLDEECLPEEGCATVKPSEHSCITGSHTDQDYKDVNEEYGARNRKSSKEKVAVLEVRTISEKASNKTVQNLSKVQHQKLGDVKVEQQKGFDNPEENSSEFPVTFKEESKFELSGSKVMEQQSNLQPEAKEKECGDSLEKDRERWRKHLKGPLTRKCVGASQECKKEADEQLIKETKTCQENSDVFQQEQGISDLLGKSGITEDARVLKTECDSWSRISNPSAFSIVPRRAAKSSRGNGHFQGHLLLPGEQIQPKQEKKGGRSSADFTVLDLEEDDEDDNEKTDDSIDEIVDVVSDYQSEEVDDVEKNNCVEYIEDDEEHVDIETVEELSEEINVAHLKTTAAHTQSFKQPSCTHISADEKAAERSRKAPPIPLKLKPDYWSDKLQKEAEAFAYYRRTHTANERRRRGEMRDLFEKLKITLGLLHSSKVSKSLILTRAFSEIQGLTDQADKLIGQKNLLTRKRNILIRKVSSLSGKTEEVVLKKLEYIYAKQQALEAQKRKKKMGSDEFDISPRISKQQEGSSASSVDLGQMFINNRRGKPLILSRKKDQATENTSPLNTPHTSANLVMTPQGQLLTLKGPLFSGPVVAVSPDLLESDLKPQVAGSAVALPENDDLFMMPRIVNVTSLATEGGLVDMGGSKYPHEVPDSKPSDHLKDTVRNEDNSLEDKGRISSRGNRDGRVTLGPTQVFLANKDSGYPQIVDVSNMQKAQEFLPKKISGDMRGIQYKWKESESRGERVKSKDSSFHKLKMKDLKDSSIEMELRKVTSAIEEAALDSSELLTNMEDEDDTDETLTSLLNEIAFLNQQLNDDSVGLAELPSSMDTEFPGDARRAFISKVPPGSRATFQVEHLGTGLKELPDVQGESDSISPLLLHLEDDDFSENEKQLAEPASEPDVLKIVIDSEIKDSLLSNKKAIDGGKNTSGLPAEPESVSSPPTLHMKTGLENSNSTDTLWRPMPKLAPLGLKVANPSSDADGQSLKVMPCLAPIAAKVGSVGHKMNLTGNDQEGRESKVMPTLAPVVAKLGNSGASPSSAGK.

Residues Lys4 and Lys178 each participate in a glycyl lysine isopeptide (Lys-Gly) (interchain with G-Cter in SUMO2) cross-link. Positions 84 to 260 form a DNA-binding region, T-box; that stretch reads MWNEFYHRST…YNPFAKGFRD (177 aa). Residues 259 to 277 show a composition bias toward basic and acidic residues; the sequence is RDDGLNNKPQRDGKQKNSS. Residues 259–322 form a disordered region; sequence RDDGLNNKPQ…GHETSGKGLE (64 aa). Residues 278–289 are compositionally biased toward polar residues; sequence DQEGNNISSSSG. The span at 309–322 shows a compositional bias: basic and acidic residues; that stretch reads PLSRGHETSGKGLE. Glycyl lysine isopeptide (Lys-Gly) (interchain with G-Cter in SUMO2) cross-links involve residues Lys323, Lys329, Lys349, Lys432, Lys460, Lys465, and Lys482. A Phosphoserine modification is found at Ser534. Residue Lys570 forms a Glycyl lysine isopeptide (Lys-Gly) (interchain with G-Cter in SUMO2) linkage. Residues 604–653 are disordered; that stretch reads QNASPNVPGKRGRPRKLKLCKAGRPPKNTGKSLISTKNTPVSPGSTFPDV. Ser607 carries the post-translational modification Phosphoserine. A Glycyl lysine isopeptide (Lys-Gly) (interchain with G-Cter in SUMO2) cross-link involves residue Lys613. Residues 613–624 are compositionally biased toward basic residues; that stretch reads KRGRPRKLKLCK. A compositionally biased stretch (polar residues) spans 632-648; it reads TGKSLISTKNTPVSPGS. The residue at position 645 (Ser645) is a Phosphoserine. Residues Lys654, Lys785, Lys791, Lys817, and Lys826 each participate in a glycyl lysine isopeptide (Lys-Gly) (interchain with G-Cter in SUMO2) cross-link. Position 851 is a phosphoserine (Ser851). Residues 881–911 are disordered; the sequence is STSYSLKPHSVPPVSRKAKSQNRQATFSGRT. The span at 901-911 shows a compositional bias: polar residues; that stretch reads QNRQATFSGRT. A Phosphoserine modification is found at Ser924. Lys928 is covalently cross-linked (Glycyl lysine isopeptide (Lys-Gly) (interchain with G-Cter in SUMO2)). Residues 971–990 form a disordered region; sequence RQAQQQQQQQQGSRPPGLSK. Residues 972-981 show a composition bias toward low complexity; sequence QAQQQQQQQQ. Glycyl lysine isopeptide (Lys-Gly) (interchain with G-Cter in SUMO2) cross-links involve residues Lys990, Lys1091, Lys1140, Lys1162, Lys1199, and Lys1207. Residues 1111-1147 are a coiled coil; the sequence is YDTLGEEAREEEEGIREEEEQLKEKKKRKKLEYTICE. The residue at position 1208 (Ser1208) is a Phosphoserine. Disordered stretches follow at residues 1246 to 1332 and 1380 to 1429; these read RKKE…PGGP and RKSR…MEDI. Low complexity-rich tracts occupy residues 1253–1269 and 1310–1322; these read QPSS…QQTS and KSSC…SSTS. 2 positions are modified to phosphoserine: Ser1430 and Ser1457. Residues Lys1461 and Lys1502 each participate in a glycyl lysine isopeptide (Lys-Gly) (interchain with G-Cter in SUMO2) cross-link. Disordered regions lie at residues 1488 to 1517, 1905 to 1927, and 1967 to 2029; these read SRKP…PGKN, SPPE…YSSG, and QMKR…EDRG. Polar residues-rich tracts occupy residues 1495-1514 and 1911-1927; these read LPST…TNRP and SFAS…YSSG. Residues 1968-1994 are compositionally biased toward basic and acidic residues; it reads MKRESQNPDQKDETNSIKREQETKKVL. Glycyl lysine isopeptide (Lys-Gly) (interchain with G-Cter in SUMO2) cross-links involve residues Lys1985 and Lys1992. Positions 2008-2023 are enriched in polar residues; it reads IKQNSGAATSEETLND. Glycyl lysine isopeptide (Lys-Gly) (interchain with G-Cter in SUMO2) cross-links involve residues Lys2103, Lys2113, Lys2135, Lys2139, Lys2146, Lys2159, Lys2194, Lys2206, and Lys2238. Positions 2258–2316 are disordered; it reads RRAAKSSRGNGHFQGHLLLPGEQIQPKQEKKGGRSSADFTVLDLEEDDEDDNEKTDDSI. The residue at position 2265 (Arg2265) is an Omega-N-methylarginine. A Glycyl lysine isopeptide (Lys-Gly) (interchain with G-Cter in SUMO2) cross-link involves residue Lys2284. A compositionally biased stretch (acidic residues) spans 2300-2316; the sequence is DLEEDDEDDNEKTDDSI. Glycyl lysine isopeptide (Lys-Gly) (interchain with G-Cter in SUMO2) cross-links involve residues Lys2378, Lys2413, Lys2457, and Lys2532. Residues 2423–2474 enclose the bHLH domain; the sequence is YYRRTHTANERRRRGEMRDLFEKLKITLGLLHSSKVSKSLILTRAFSEIQGL. Ser2541 carries the post-translational modification Phosphoserine. A Glycyl lysine isopeptide (Lys-Gly) (interchain with G-Cter in SUMO2) cross-link involves residue Lys2546. Residues 2576 to 2595 form a disordered region; the sequence is KKDQATENTSPLNTPHTSAN. The segment covering 2581 to 2595 has biased composition (polar residues); that stretch reads TENTSPLNTPHTSAN. Glycyl lysine isopeptide (Lys-Gly) (interchain with G-Cter in SUMO2) cross-links involve residues Lys2629, Lys2679, Lys2698, and Lys2784. The tract at residues 2668-2709 is disordered; the sequence is GSKYPHEVPDSKPSDHLKDTVRNEDNSLEDKGRISSRGNRDG. A compositionally biased stretch (basic and acidic residues) spans 2671 to 2709; it reads YPHEVPDSKPSDHLKDTVRNEDNSLEDKGRISSRGNRDG. A coiled-coil region spans residues 2817–2841; it reads DDTDETLTSLLNEIAFLNQQLNDDS. 2 positions are modified to phosphoserine: Ser2910 and Ser2921. The disordered stretch occupies residues 2944–2968; that stretch reads AIDGGKNTSGLPAEPESVSSPPTLH. A Phosphoserine modification is found at Ser2978. Lys3041 participates in a covalent cross-link: Glycyl lysine isopeptide (Lys-Gly) (interchain with G-Cter in SUMO2).

In terms of assembly, interacts with MAX. Requires dimerization with MAX for E-box binding. Component of some MLL1/MLL complex, at least composed of the core components KMT2A/MLL1, ASH2L, HCFC1/HCF1, WDR5 and RBBP5, as well as the facultative components BACC1, CHD8, E2F6, HSP70, INO80C, KANSL1, LAS1L, MAX, MCRS1, MGA, MYST1/MOF, PELP1, PHF20, PRP31, RING2, RUVB1/TIP49A, RUVB2/TIP49B, SENP3, TAF1, TAF4, TAF6, TAF7, TAF9 and TEX10. Interacts with ZMYND11. As to expression, highly expressed in germ cells and granulosa cells.

Its subcellular location is the nucleus. Functions as a dual-specificity transcription factor, regulating the expression of both MAX-network and T-box family target genes. Functions as a repressor or an activator. Binds to 5'-AATTTCACACCTAGGTGTGAAATT-3' core sequence and seems to regulate MYC-MAX target genes. Suppresses transcriptional activation by MYC and inhibits MYC-dependent cell transformation. Function activated by heterodimerization with MAX. This heterodimerization serves the dual function of both generating an E-box-binding heterodimer and simultaneously blocking interaction of a corepressor. The polypeptide is MAX gene-associated protein (Homo sapiens (Human)).